Here is a 150-residue protein sequence, read N- to C-terminus: uncharacterized protein (150 aa).

The signal sequence occupies residues 1–23; it reads MYSILIACLVLLLCLIIYVGHRA.

Belongs to the asfivirus EP152R family.

Its subcellular location is the virion. This is an uncharacterized protein from African swine fever virus (isolate Tick/South Africa/Pretoriuskop Pr4/1996) (ASFV).